A 234-amino-acid chain; its full sequence is NLP effector protein 1 (234 aa).

An N-terminal signal peptide occupies residues Met1–Ala18. Asn66 carries an N-linked (GlcNAc...) asparagine glycan. Positions Ala102–Asp112 match the Conserved undecapeptide motif I motif. Positions Gly119–Glu125 match the Hepta-peptide GHRHDWE motif II motif.

This sequence belongs to the Necrosis inducing protein (NPP1) family.

The protein localises to the secreted. Its function is as follows. Secreted effector that contributes to virulence during infection by P.capsici. Induces distinct chlorosis at 3 days after inoculation of host C.annuum leaves, and all the chlorotic areas gradually turn brown and become moderately necrotic at 7 days after inoculation. Leads only to chlorotic areas, without necrosis at 7 days after non-host N.benthamiana leaves infection. Induces cell death in hot pepper. The protein is NLP effector protein 1 of Phytophthora capsici.